Here is a 55-residue protein sequence, read N- to C-terminus: MVGQEQLESSPLCQHSDNETETKRECSVVIPDDWQLTSQQQAFIELFAEDDQPKQ.

A compositionally biased stretch (polar residues) spans 1-15; sequence MVGQEQLESSPLCQH. The interval 1-26 is disordered; sequence MVGQEQLESSPLCQHSDNETETKREC. Residues 16 to 26 show a composition bias toward basic and acidic residues; it reads SDNETETKREC.

This is an uncharacterized protein from Escherichia coli (strain K12).